The following is a 339-amino-acid chain: mRNA cap guanine-N(7) methyltransferase 2 (339 aa).

In terms of domain architecture, mRNA cap 0 methyltransferase spans 1–277; sequence MAVTPHHRLY…LYSTFVFQKP (277 aa). S-adenosyl-L-methionine contacts are provided by residues lysine 14, aspartate 54, and 82 to 83; that span reads DP. The interval 314 to 339 is disordered; it reads VSRTDILPPADNEKGILGPGPADMRL.

It belongs to the class I-like SAM-binding methyltransferase superfamily. mRNA cap 0 methyltransferase family.

It localises to the nucleus. The catalysed reaction is a 5'-end (5'-triphosphoguanosine)-ribonucleoside in mRNA + S-adenosyl-L-methionine = a 5'-end (N(7)-methyl 5'-triphosphoguanosine)-ribonucleoside in mRNA + S-adenosyl-L-homocysteine. MRNA-capping methyltransferase that methylates the N7 position of the added guanosine to the 5'-cap structure of mRNAs. Binds RNA containing 5'-terminal GpppC. The protein is mRNA cap guanine-N(7) methyltransferase 2 of Oryza sativa subsp. japonica (Rice).